We begin with the raw amino-acid sequence, 654 residues long: Fructose-1,6-bisphosphatase class 3 (654 aa).

Residues 288–307 form a disordered region; that stretch reads NPAFKPKKRPDKHERLTQRE. Residues 298–307 are compositionally biased toward basic and acidic residues; sequence DKHERLTQRE.

It belongs to the FBPase class 3 family. Mn(2+) is required as a cofactor.

The catalysed reaction is beta-D-fructose 1,6-bisphosphate + H2O = beta-D-fructose 6-phosphate + phosphate. It functions in the pathway carbohydrate biosynthesis; gluconeogenesis. The chain is Fructose-1,6-bisphosphatase class 3 from Staphylococcus aureus (strain MSSA476).